The primary structure comprises 3583 residues: Surfactin synthase subunit 2 (3583 aa).

Carrier domains are found at residues 965–1039 (APKT…EENE), 2005–2080 (APET…EASA), and 3034–3108 (APTT…ERAE). O-(pantetheine 4'-phosphoryl)serine is present on residues Ser999, Ser2040, and Ser3069.

The protein belongs to the ATP-dependent AMP-binding enzyme family. The cofactor is pantetheine 4'-phosphate.

The protein operates within antibiotic biosynthesis; surfactin biosynthesis. Its function is as follows. This protein is a multifunctional enzyme able to activate and polymerize the amino acids Leu, Glu, Asp and Val. Activation sites for these AA consist of individual domains. The chain is Surfactin synthase subunit 2 (srfAB) from Bacillus subtilis (strain 168).